Reading from the N-terminus, the 354-residue chain is NADH-quinone oxidoreductase subunit H (354 aa).

8 consecutive transmembrane segments (helical) span residues 22–42, 91–111, 124–144, 168–188, 203–223, 255–275, 291–311, and 326–346; these read ILIRAVIIVVPLLLCVAYLIL, YLIAPLMVLMPAVAIWAVIPF, LLYVMAISSVGVYGVILAGWA, MGFALVTVLMVAGSLNLSAIV, ILSWNWLPLLPMFGVYFISGV, LFFLAEYINMIIISTMTALMF, IPGFFWLLIKVFLLLSVFIWI, and LGWKVFIPLTVAWLIIVAIWI.

This sequence belongs to the complex I subunit 1 family. In terms of assembly, NDH-1 is composed of 14 different subunits. Subunits NuoA, H, J, K, L, M, N constitute the membrane sector of the complex.

Its subcellular location is the cell inner membrane. It carries out the reaction a quinone + NADH + 5 H(+)(in) = a quinol + NAD(+) + 4 H(+)(out). In terms of biological role, NDH-1 shuttles electrons from NADH, via FMN and iron-sulfur (Fe-S) centers, to quinones in the respiratory chain. The immediate electron acceptor for the enzyme in this species is believed to be ubiquinone. Couples the redox reaction to proton translocation (for every two electrons transferred, four hydrogen ions are translocated across the cytoplasmic membrane), and thus conserves the redox energy in a proton gradient. This subunit may bind ubiquinone. In Cupriavidus taiwanensis (strain DSM 17343 / BCRC 17206 / CCUG 44338 / CIP 107171 / LMG 19424 / R1) (Ralstonia taiwanensis (strain LMG 19424)), this protein is NADH-quinone oxidoreductase subunit H.